We begin with the raw amino-acid sequence, 245 residues long: 8-amino-3,8-dideoxy-manno-octulosonate cytidylyltransferase (245 aa).

The protein belongs to the KdsB family.

The protein resides in the cytoplasm. The catalysed reaction is 8-amino-3,8-dideoxy-alpha-D-manno-octulosonate + CTP = CMP-8-amino-3,8-dideoxy-alpha-D-manno-oct-2-ulosonate + diphosphate. The protein operates within bacterial outer membrane biogenesis; lipopolysaccharide biosynthesis. Activates KDO8N (a required 8-carbon sugar) for incorporation into bacterial lipopolysaccharide in the Shewanella genus. This Shewanella woodyi (strain ATCC 51908 / MS32) protein is 8-amino-3,8-dideoxy-manno-octulosonate cytidylyltransferase.